The primary structure comprises 263 residues: Endonuclease 8 (263 aa).

Residue P2 is the Schiff-base intermediate with DNA of the active site. The active-site Proton donor is E3. Residue K53 is the Proton donor; for beta-elimination activity of the active site. Q70, R125, and N169 together coordinate DNA. Residues 229–263 (KVFHRDGEACERCGGIIEKTTLSSRPFYWCPHCQK) form an FPG-type zinc finger. The Proton donor; for delta-elimination activity role is filled by R253.

It belongs to the FPG family. Requires Zn(2+) as cofactor.

The catalysed reaction is 2'-deoxyribonucleotide-(2'-deoxyribose 5'-phosphate)-2'-deoxyribonucleotide-DNA = a 3'-end 2'-deoxyribonucleotide-(2,3-dehydro-2,3-deoxyribose 5'-phosphate)-DNA + a 5'-end 5'-phospho-2'-deoxyribonucleoside-DNA + H(+). Involved in base excision repair of DNA damaged by oxidation or by mutagenic agents. Acts as a DNA glycosylase that recognizes and removes damaged bases. Has a preference for oxidized pyrimidines, such as thymine glycol, 5,6-dihydrouracil and 5,6-dihydrothymine. Has AP (apurinic/apyrimidinic) lyase activity and introduces nicks in the DNA strand. Cleaves the DNA backbone by beta-delta elimination to generate a single-strand break at the site of the removed base with both 3'- and 5'-phosphates. The protein is Endonuclease 8 of Salmonella heidelberg (strain SL476).